We begin with the raw amino-acid sequence, 348 residues long: Dihydroorotase (348 aa).

Positions 17 and 19 each coordinate Zn(2+). Residues His19–Arg21 and Asn45 each bind substrate. Residues Lys103, His140, and His178 each contribute to the Zn(2+) site. Position 103 is an N6-carboxylysine (Lys103). Residue His140 coordinates substrate. Leu223 is a binding site for substrate. Residue Asp251 participates in Zn(2+) binding. Asp251 is a catalytic residue. The substrate site is built by His255 and Ala267.

Belongs to the metallo-dependent hydrolases superfamily. DHOase family. Class II DHOase subfamily. In terms of assembly, homodimer. It depends on Zn(2+) as a cofactor.

It carries out the reaction (S)-dihydroorotate + H2O = N-carbamoyl-L-aspartate + H(+). It functions in the pathway pyrimidine metabolism; UMP biosynthesis via de novo pathway; (S)-dihydroorotate from bicarbonate: step 3/3. Functionally, catalyzes the reversible cyclization of carbamoyl aspartate to dihydroorotate. The polypeptide is Dihydroorotase (Shigella boydii serotype 4 (strain Sb227)).